The sequence spans 4588 residues: Protocadherin Fat 1 (4588 aa).

The N-terminal stretch at 1-21 (MGRHLALLLLLLLLFQHFGDS) is a signal peptide. Topologically, residues 22–4181 (DGSQRLEQTP…STPWNIGLAE (4160 aa)) are extracellular. Cadherin domains lie at 35 to 149 (THLE…RPLF) and 150 to 257 (SPTS…APVI). N-linked (GlcNAc...) asparagine glycosylation is present at asparagine 40. An N-linked (GlcNAc...) asparagine glycan is attached at asparagine 333. Cadherin domains follow at residues 368-463 (EKDV…PPEF), 464-569 (TQTA…TPLF), 570-673 (EKIN…VNLQ), 718-822 (STLP…PPEF), 823-927 (LQES…PPTF), 928-1034 (IPPN…PPVF), 1035-1139 (SSFV…APQT), 1140-1245 (SEPV…KPQF), 1246-1357 (LQKF…EPIS), 1359-1456 (EESF…RPQF), 1457-1562 (STSK…APWF), 1563-1667 (TASS…SPKF), 1668-1765 (TSKE…APVF), 1766-1879 (MQAE…PPVF), 1880-1979 (AKPL…HLKF), 1980-2081 (TQDV…APVF), 2082-2182 (VNLP…MPVF), 2183-2283 (EKPF…PPVF), 2284-2390 (AQQS…PPLF), 2391-2492 (EQQI…SPAF), 2493-2596 (LQNE…APQF), 2597-2703 (RATK…LPKF), 2704-2809 (SEPF…SPVF), 2810-2918 (ESSP…PPRF), 2919-3023 (TAEI…SPVC), 3024-3125 (EKTL…APEF), 3126-3230 (SADP…PPVF), 3231-3335 (EYRE…TPVF), 3336-3440 (SQDT…APVF), 3441-3545 (SRGN…PPAI), and 3546-3647 (LPLE…AIRF). Asparagine 660, asparagine 740, and asparagine 791 each carry an N-linked (GlcNAc...) asparagine glycan. The N-linked (GlcNAc...) asparagine glycan is linked to asparagine 998. 2 N-linked (GlcNAc...) asparagine glycosylation sites follow: asparagine 1426 and asparagine 1551. Asparagine 1748, asparagine 1864, asparagine 1902, asparagine 1940, and asparagine 1991 each carry an N-linked (GlcNAc...) asparagine glycan. Residues asparagine 2325 and asparagine 2464 are each glycosylated (N-linked (GlcNAc...) asparagine). Residues asparagine 3324, asparagine 3422, asparagine 3444, asparagine 3613, asparagine 3640, and asparagine 3716 are each glycosylated (N-linked (GlcNAc...) asparagine). The region spanning 3790–3827 (VHHGCEDDPCPEGSECVSDPWEEKHTCVCPSGRFGQCP) is the EGF-like 1 domain. Cystine bridges form between cysteine 3794-cysteine 3805, cysteine 3799-cysteine 3816, cysteine 3818-cysteine 3826, cysteine 3976-cysteine 4009, cysteine 4017-cysteine 4028, cysteine 4022-cysteine 4038, cysteine 4040-cysteine 4049, cysteine 4056-cysteine 4067, cysteine 4061-cysteine 4076, cysteine 4078-cysteine 4087, cysteine 4093-cysteine 4104, cysteine 4098-cysteine 4113, cysteine 4115-cysteine 4124, cysteine 4131-cysteine 4142, and cysteine 4136-cysteine 4151. Residues 3829-4009 (SSSMTLTGNS…EESVDVSPGC (181 aa)) form the Laminin G-like domain. 3 consecutive EGF-like domains span residues 4013 to 4050 (ATED…THCE), 4052 to 4088 (SVNP…QRCQ), and 4089 to 4125 (LSPY…ERCQ). Positions 4127-4163 (DIDECSGNPCLHGALCENTHGSYHCNCSHEYRGRHCE) constitute an EGF-like 5; calcium-binding domain. N-linked (GlcNAc...) asparagine glycosylation occurs at asparagine 4152. A disulfide bond links cysteine 4153 and cysteine 4162. A helical transmembrane segment spans residues 4182-4202 (GIGIVVFVAGIFLLVVVFVLC). The Cytoplasmic portion of the chain corresponds to 4203-4588 (RKMISRKKKH…PLDSQQHTEV (386 aa)). Positions 4204–4214 (KMISRKKKHQA) match the Nuclear localization signal motif. Disordered regions lie at residues 4255–4275 (SYTP…SFEG), 4303–4327 (SVAP…QKPS), and 4343–4376 (LSKK…SESC). Residues 4256–4265 (YTPSIPSDSR) show a composition bias toward polar residues. Over residues 4363–4374 (SEVQSLSSFQSE) the composition is skewed to polar residues. The short motif at 4378-4382 (DNGYH) is the PTB-like motif element. Disordered regions lie at residues 4435–4479 (FPPP…SSSR) and 4565–4588 (ESGD…HTEV).

Interacts (via the C-terminus 4300-4400 AA) with ATN1. Interacts with RERE. Post-translationally, undergoes proteolytic cleavage. The extracellular domain is cleaved off and the cytoplasmic domain (about 400 AA) shuttles to the nucleus. Expressed in many epithelial and some endothelial and smooth muscle cells.

It is found in the cell membrane. The protein resides in the nucleus. Functionally, plays an essential role for cellular polarization, directed cell migration and modulating cell-cell contact. This Homo sapiens (Human) protein is Protocadherin Fat 1 (FAT1).